The primary structure comprises 122 residues: Small ribosomal subunit protein uS13 (122 aa).

The segment at 94–122 (GLPVRGQSTQKNARTRKGPRKTVAGKKGK) is disordered. Positions 106–122 (ARTRKGPRKTVAGKKGK) are enriched in basic residues.

It belongs to the universal ribosomal protein uS13 family. In terms of assembly, part of the 30S ribosomal subunit. Forms a loose heterodimer with protein S19. Forms two bridges to the 50S subunit in the 70S ribosome.

Functionally, located at the top of the head of the 30S subunit, it contacts several helices of the 16S rRNA. In the 70S ribosome it contacts the 23S rRNA (bridge B1a) and protein L5 of the 50S subunit (bridge B1b), connecting the 2 subunits; these bridges are implicated in subunit movement. Contacts the tRNAs in the A and P-sites. The chain is Small ribosomal subunit protein uS13 from Mycoplasmopsis synoviae (strain 53) (Mycoplasma synoviae).